The chain runs to 88 residues: Small ribosomal subunit protein bS20 (88 aa).

The segment at 1-23 (MANSPQAKKRARQNDKARAHNAS) is disordered.

This sequence belongs to the bacterial ribosomal protein bS20 family.

Functionally, binds directly to 16S ribosomal RNA. This is Small ribosomal subunit protein bS20 from Saccharophagus degradans (strain 2-40 / ATCC 43961 / DSM 17024).